A 268-amino-acid chain; its full sequence is Thiazole synthase (268 aa).

Lys-96 serves as the catalytic Schiff-base intermediate with DXP. 1-deoxy-D-xylulose 5-phosphate is bound by residues Gly-157, 185-186 (AG), and 207-208 (NT). The tract at residues 238–268 (PMRPREAASPSSPVEGVPFTPTGPRPGRGPQ) is disordered. Positions 258–268 (PTGPRPGRGPQ) are enriched in pro residues.

Belongs to the ThiG family. In terms of assembly, homotetramer. Forms heterodimers with either ThiH or ThiS.

It localises to the cytoplasm. The catalysed reaction is [ThiS sulfur-carrier protein]-C-terminal-Gly-aminoethanethioate + 2-iminoacetate + 1-deoxy-D-xylulose 5-phosphate = [ThiS sulfur-carrier protein]-C-terminal Gly-Gly + 2-[(2R,5Z)-2-carboxy-4-methylthiazol-5(2H)-ylidene]ethyl phosphate + 2 H2O + H(+). It participates in cofactor biosynthesis; thiamine diphosphate biosynthesis. Catalyzes the rearrangement of 1-deoxy-D-xylulose 5-phosphate (DXP) to produce the thiazole phosphate moiety of thiamine. Sulfur is provided by the thiocarboxylate moiety of the carrier protein ThiS. In vitro, sulfur can be provided by H(2)S. The polypeptide is Thiazole synthase (Thermus thermophilus (strain ATCC BAA-163 / DSM 7039 / HB27)).